The following is a 174-amino-acid chain: Suppressor of RNA silencing (174 aa).

A coiled-coil region spans residues 86 to 116; it reads HAQLRSLNAELDTLEAREESLRAQIKALSAG.

Belongs to the virgaviridae suppressor of RNA silencing family.

In terms of biological role, suppressor of RNA-mediated gene silencing, also known as post-transcriptional gene silencing (PTGS), a mechanism of plant viral defense that performs sequence-specific inhibition of viral mRNAs expression. This Soil-borne wheat mosaic virus (strain United States/Nebraska/1981) (SBWMV) protein is Suppressor of RNA silencing.